Reading from the N-terminus, the 71-residue chain is Ceratotoxin-A (71 aa).

The N-terminal stretch at Met-1–Ala-23 is a signal peptide. Propeptides lie at residues Glu-24–Arg-35 and Val-65–Gly-71.

As to quaternary structure, homomer of four to six subunits.

The protein resides in the secreted. Functionally, female-specific peptides with potent activity against Gram-positive and Gram-negative bacteria. They have as well hemolytic activity. The protein is Ceratotoxin-A (CTXA2) of Ceratitis capitata (Mediterranean fruit fly).